The primary structure comprises 678 residues: Serine/threonine-protein kinase PLK (678 aa).

One can recognise a Protein kinase domain in the interval tyrosine 22–leucine 309. Residues leucine 28–valine 36 and lysine 51 each bind ATP. Catalysis depends on aspartate 145, which acts as the Proton acceptor. 2 positions are modified to phosphothreonine; by autocatalysis: threonine 179 and threonine 183. 2 POLO box domains span residues tyrosine 435–asparagine 516 and phenylalanine 563–alanine 644. A disordered region spans residues lysine 658–glutamate 678. The segment covering lysine 663–glutamate 678 has biased composition (polar residues).

This sequence belongs to the protein kinase superfamily. Ser/Thr protein kinase family. CDC5/Polo subfamily. Interacts with Kin-13. Autophosphorylated. Autophosphorylation is critical for its function in cell growth, cytokinesis and formation of flagella.

It is found in the cell projection. It localises to the cilium. The protein resides in the flagellum. The protein localises to the cytoplasm. Its subcellular location is the cytoskeleton. It is found in the flagellum basal body. It localises to the flagellum axoneme. The protein resides in the spindle. The protein localises to the membrane. The catalysed reaction is L-seryl-[protein] + ATP = O-phospho-L-seryl-[protein] + ADP + H(+). It carries out the reaction L-threonyl-[protein] + ATP = O-phospho-L-threonyl-[protein] + ADP + H(+). With respect to regulation, inhibited by GW843286X (GW), an ATP-competitive inhibitor. Inhibition leads to reduced growth, increased number of cells with more than four nuclei, increased number of cells with condensed nuclei, cell cycle arrest at G2/M or G1/S phase depending on the treatment time with GW, and increased length of membrane-bound portions of the caudal and anterior flagella. Its function is as follows. Involved in cell cycle. Involved in cell division. Involved in cytokinesis. Involved in flagella biogenesis and in regulation of flagella length in interphase. Involved in formation of median bodies during interphase. Phosphorylates Kin-13 in vitro. Likely regulates microtubule (MT) depolymerizing activity of Kin-13. The sequence is that of Serine/threonine-protein kinase PLK from Giardia intestinalis (strain ATCC 50803 / WB clone C6) (Giardia lamblia).